Reading from the N-terminus, the 453-residue chain is UDP-glycosyltransferase 74E2 (453 aa).

The active-site Proton acceptor is the His-17. Position 17 (His-17) interacts with an anthocyanidin. The Charge relay role is filled by Asp-109. UDP-alpha-D-glucose-binding residues include Thr-131, Gln-334, His-349, Trp-352, Asn-353, Ser-354, Glu-357, Asp-373, and Gln-374.

The protein belongs to the UDP-glycosyltransferase family. As to expression, expressed in roots, cotyledons and leaf hydathodes.

It catalyses the reaction (indol-3-yl)butanoate + UDP-alpha-D-glucose = 4-(indol-3-yl)butanoyl-beta-D-glucose + UDP. Glucosyltransferase that acts on the auxin indole-3-butyric acid (IBA). Mediates abiotic stress responses and stress-induced morphological adaptations by regulating auxin homeostasis. Possesses low activity in vitro on jasmonate (JA) and the synthetic auxin analog naphthaleneacetic acid (NAA). The polypeptide is UDP-glycosyltransferase 74E2 (UGT74E2) (Arabidopsis thaliana (Mouse-ear cress)).